The chain runs to 305 residues: Glycine--tRNA ligase alpha subunit (305 aa).

This sequence belongs to the class-II aminoacyl-tRNA synthetase family. Tetramer of two alpha and two beta subunits.

The protein resides in the cytoplasm. It catalyses the reaction tRNA(Gly) + glycine + ATP = glycyl-tRNA(Gly) + AMP + diphosphate. The protein is Glycine--tRNA ligase alpha subunit of Vibrio vulnificus (strain CMCP6).